The chain runs to 195 residues: Peptidyl-tRNA hydrolase (195 aa).

Position 14 (Tyr-14) interacts with tRNA. His-19 (proton acceptor) is an active-site residue. Tyr-64 and Asn-66 together coordinate tRNA.

It belongs to the PTH family. As to quaternary structure, monomer.

The protein localises to the cytoplasm. The enzyme catalyses an N-acyl-L-alpha-aminoacyl-tRNA + H2O = an N-acyl-L-amino acid + a tRNA + H(+). Functionally, hydrolyzes ribosome-free peptidyl-tRNAs (with 1 or more amino acids incorporated), which drop off the ribosome during protein synthesis, or as a result of ribosome stalling. Its function is as follows. Catalyzes the release of premature peptidyl moieties from peptidyl-tRNA molecules trapped in stalled 50S ribosomal subunits, and thus maintains levels of free tRNAs and 50S ribosomes. The polypeptide is Peptidyl-tRNA hydrolase (Desulforudis audaxviator (strain MP104C)).